A 159-amino-acid polypeptide reads, in one-letter code: ATP synthase subunit b (159 aa).

Residues 8–28 (ILATIINFIILILILKHFFWD) traverse the membrane as a helical segment.

This sequence belongs to the ATPase B chain family. F-type ATPases have 2 components, F(1) - the catalytic core - and F(0) - the membrane proton channel. F(1) has five subunits: alpha(3), beta(3), gamma(1), delta(1), epsilon(1). F(0) has three main subunits: a(1), b(2) and c(10-14). The alpha and beta chains form an alternating ring which encloses part of the gamma chain. F(1) is attached to F(0) by a central stalk formed by the gamma and epsilon chains, while a peripheral stalk is formed by the delta and b chains.

Its subcellular location is the cell membrane. Functionally, f(1)F(0) ATP synthase produces ATP from ADP in the presence of a proton or sodium gradient. F-type ATPases consist of two structural domains, F(1) containing the extramembraneous catalytic core and F(0) containing the membrane proton channel, linked together by a central stalk and a peripheral stalk. During catalysis, ATP synthesis in the catalytic domain of F(1) is coupled via a rotary mechanism of the central stalk subunits to proton translocation. In terms of biological role, component of the F(0) channel, it forms part of the peripheral stalk, linking F(1) to F(0). The protein is ATP synthase subunit b of Clostridium perfringens (strain ATCC 13124 / DSM 756 / JCM 1290 / NCIMB 6125 / NCTC 8237 / Type A).